The following is a 597-amino-acid chain: C4b-binding protein alpha chain (597 aa).

The first 48 residues, 1–48 (MHPPKTPSGALHRKRKMAAWPFSRLWKVSDPILFQMTLIAALLPAVLG), serve as a signal peptide directing secretion. 8 Sushi domains span residues 49-110 (NCGP…FCIY), 111-172 (KRCR…QCEI), 173-236 (VKCK…TCEK), 237-296 (ITCR…ACEP), 297-362 (NSCI…GCEA), 363-424 (LCCP…SCGD), 425-482 (ICNF…QCKA), and 483-540 (LCRK…KCEW). Intrachain disulfides connect cysteine 50–cysteine 96, cysteine 81–cysteine 108, cysteine 113–cysteine 154, cysteine 140–cysteine 170, cysteine 175–cysteine 217, cysteine 203–cysteine 234, cysteine 239–cysteine 281, cysteine 267–cysteine 294, cysteine 299–cysteine 348, cysteine 332–cysteine 360, cysteine 365–cysteine 409, cysteine 399–cysteine 422, cysteine 426–cysteine 468, cysteine 454–cysteine 480, cysteine 484–cysteine 525, and cysteine 511–cysteine 538. Asparagine 221 carries an N-linked (GlcNAc...) asparagine glycan. N-linked (GlcNAc...) asparagine glycosylation is found at asparagine 506 and asparagine 528.

As to quaternary structure, disulfide-linked complex of alpha and beta chains of 3 possible sorts: a 570 kDa complex of 7 alpha chains and 1 beta chain, a 530 kDa homoheptamer of alpha chains or a 500 kDa complex of 6 alpha chains and 1 beta chain. The central body of the alpha chain homomer supports tentacles, each with the binding site for C4b at the end. In terms of assembly, (Microbial infection) Interacts with Staphylococcus aureus protein SdrE; this interaction inhibits complement-mediated bacterial opsonization. As to expression, chylomicrons in the plasma.

It localises to the secreted. Controls the classical pathway of complement activation. It binds as a cofactor to C3b/C4b inactivator (C3bINA), which then hydrolyzes the complement fragment C4b. It also accelerates the degradation of the C4bC2a complex (C3 convertase) by dissociating the complement fragment C2a. Alpha chain binds C4b. It also interacts with anticoagulant protein S and with serum amyloid P component. This is C4b-binding protein alpha chain (C4BPA) from Homo sapiens (Human).